We begin with the raw amino-acid sequence, 306 residues long: Low density lipoprotein receptor adapter protein 1 (306 aa).

Met1 is subject to N-acetylmethionine. Position 14 is a phosphoserine (Ser14). The PID domain occupies 44 to 168 (GMVFSLKYLG…VAQAFKVAFE (125 aa)). Positions 178-204 (EKREKANQEGGDVPGTRRDSTPSLKTS) are disordered. Phosphoserine occurs at positions 197 and 200. The short motif at 210–214 (LLDLE) is the Clathrin box element. The interval 247–274 (WELDDGLDEAFSRLAQSRTNPQVLDTGL) is AP-2 complex binding. Positions 255 to 264 (EAFSRLAQSR) match the [DE]-X(1,2)-F-X-X-[FL]-X-X-X-R motif motif.

In terms of assembly, interacts (via PID domain) with LDLR (via NPXY motifs). Binds to soluble clathrin trimers. Interacts with AP2B1; the interaction mediates the association with the AP-2 complex. Interacts with VLDLR. Interacts with LRP2.

It localises to the cytoplasm. Adapter protein (clathrin-associated sorting protein (CLASP)) required for efficient endocytosis of the LDL receptor (LDLR) in polarized cells such as hepatocytes and lymphocytes, but not in non-polarized cells (fibroblasts). May be required for LDL binding and internalization but not for receptor clustering in coated pits. May facilitate the endocytosis of LDLR and LDLR-LDL complexes from coated pits by stabilizing the interaction between the receptor and the structural components of the pits. May also be involved in the internalization of other LDLR family members. Binds to phosphoinositides, which regulate clathrin bud assembly at the cell surface. Required for trafficking of LRP2 to the endocytic recycling compartment which is necessary for LRP2 proteolysis, releasing a tail fragment which translocates to the nucleus and mediates transcriptional repression. The chain is Low density lipoprotein receptor adapter protein 1 from Rattus norvegicus (Rat).